A 214-amino-acid chain; its full sequence is Holliday junction branch migration complex subunit RuvA (214 aa).

Positions 1 to 68 (MIGFLQGKVL…QPKPVLIGFD (68 aa)) are domain I. Residues 69 to 146 (SAEEKDFFQL…RFLLAADEAG (78 aa)) form a domain II region. Positions 147 to 160 (AGDGVSKTGTPSLP) are flexible linker. The segment at 161–214 (IQKAIDQVVDVLVQQLGHTPSAAKMMVAQALDRDPEIMTPEALFDEVYKGDVDA) is domain III.

Belongs to the RuvA family. In terms of assembly, homotetramer. Forms an RuvA(8)-RuvB(12)-Holliday junction (HJ) complex. HJ DNA is sandwiched between 2 RuvA tetramers; dsDNA enters through RuvA and exits via RuvB. An RuvB hexamer assembles on each DNA strand where it exits the tetramer. Each RuvB hexamer is contacted by two RuvA subunits (via domain III) on 2 adjacent RuvB subunits; this complex drives branch migration. In the full resolvosome a probable DNA-RuvA(4)-RuvB(12)-RuvC(2) complex forms which resolves the HJ.

Its subcellular location is the cytoplasm. In terms of biological role, the RuvA-RuvB-RuvC complex processes Holliday junction (HJ) DNA during genetic recombination and DNA repair, while the RuvA-RuvB complex plays an important role in the rescue of blocked DNA replication forks via replication fork reversal (RFR). RuvA specifically binds to HJ cruciform DNA, conferring on it an open structure. The RuvB hexamer acts as an ATP-dependent pump, pulling dsDNA into and through the RuvAB complex. HJ branch migration allows RuvC to scan DNA until it finds its consensus sequence, where it cleaves and resolves the cruciform DNA. In Desulforapulum autotrophicum (strain ATCC 43914 / DSM 3382 / VKM B-1955 / HRM2) (Desulfobacterium autotrophicum), this protein is Holliday junction branch migration complex subunit RuvA.